The chain runs to 911 residues: Protein transport protein SEC24-1 (911 aa).

Over residues 108 to 123 (QPLPQQQQQQQQQQGP) the composition is skewed to low complexity. Residues 108–130 (QPLPQQQQQQQQQQGPAKPPKPM) form a disordered region. Residues cysteine 226, cysteine 229, cysteine 248, and cysteine 251 each contribute to the Zn(2+) site. Residues 226-251 (CRRCRSYMNPFVHFNQDGRRWKCNIC) are zinc finger-like.

It belongs to the SEC23/SEC24 family. SEC24 subfamily. As to quaternary structure, the COPII coat is composed of at least 5 proteins: the SEC23/24 complex, the SEC13/31 complex, and the protein SAR1. Golgi apparatus membrane; Peripheral membrane protein; Cytoplasmic side.

The protein localises to the cytoplasm. It is found in the cytoplasmic vesicle. Its subcellular location is the COPII-coated vesicle membrane. It localises to the endoplasmic reticulum membrane. The protein resides in the golgi apparatus membrane. Its function is as follows. Component of the coat protein complex II (COPII) which promotes the formation of transport vesicles from the endoplasmic reticulum (ER). The coat has two main functions, the physical deformation of the endoplasmic reticulum membrane into vesicles and the selection of cargo molecules. The protein is Protein transport protein SEC24-1 (SEC241) of Naumovozyma castellii (Yeast).